Here is a 411-residue protein sequence, read N- to C-terminus: uncharacterized protein (411 aa).

Residues 20-199 (FLYFDFDAFF…LPITEIPGIG (180 aa)) enclose the UmuC domain.

Belongs to the DNA polymerase type-Y family.

This is an uncharacterized protein from Mycoplasma genitalium (strain ATCC 33530 / DSM 19775 / NCTC 10195 / G37) (Mycoplasmoides genitalium).